Consider the following 247-residue polypeptide: MASLSRPSLPSCLCSFLLLLLLQVSSSYAGQFRVIGPRHPIRALVGDEVELPCRISPGKNATGMEVGWYRPPFSRVVHLYRNGKDQDGDQAPEYRGRTELLKDAIGEGKVTLRIRNVRFSDEGGFTCFFRDHSYQEEAAMELKVEDPFYWVSPGVLVLLAVLPVLLLQITVGLIFLCLQYRLRGKLRAEIENLHRTFDPHFLRVPCWKITLFVIVPVLGPLVALIICYNWLHRRLAGQFLEELRNPF.

Residues 1–29 form the signal peptide; it reads MASLSRPSLPSCLCSFLLLLLLQVSSSYA. Topologically, residues 30-154 are extracellular; it reads GQFRVIGPRH…EDPFYWVSPG (125 aa). The region spanning 32 to 145 is the Ig-like V-type domain; sequence FRVIGPRHPI…EEAAMELKVE (114 aa). An intrachain disulfide couples C53 to C127. N-linked (GlcNAc...) asparagine glycosylation occurs at N60. The chain crosses the membrane as a helical span at residues 155-175; the sequence is VLVLLAVLPVLLLQITVGLIF. Residues 176-210 are Cytoplasmic-facing; that stretch reads LCLQYRLRGKLRAEIENLHRTFDPHFLRVPCWKIT. The helical transmembrane segment at 211-231 threads the bilayer; the sequence is LFVIVPVLGPLVALIICYNWL. The Extracellular segment spans residues 232 to 247; it reads HRRLAGQFLEELRNPF.

The protein belongs to the immunoglobulin superfamily. BTN/MOG family. In terms of assembly, homodimer. May form heterodimers between the different isoforms. (Microbial infection) Interacts with rubella virus E2 glycoprotein. Found exclusively in the CNS, where it is localized on the surface of myelin and oligodendrocyte cytoplasmic membranes.

The protein resides in the cell membrane. Functionally, mediates homophilic cell-cell adhesion. Minor component of the myelin sheath. May be involved in completion and/or maintenance of the myelin sheath and in cell-cell communication. In terms of biological role, (Microbial infection) Acts as a receptor for rubella virus. This Homo sapiens (Human) protein is Myelin-oligodendrocyte glycoprotein (MOG).